The chain runs to 337 residues: LIX1-like protein (337 aa).

The segment at 1-64 (METMRAQRLQ…PLLLSGAPGL (64 aa)) is disordered. A compositionally biased stretch (low complexity) spans 26 to 38 (PGVTGAAAATATP). Positions 39–56 (PAGPPPAPPPPAPPPPPL) are enriched in pro residues.

Belongs to the LIX1 family.

The polypeptide is LIX1-like protein (LIX1L) (Homo sapiens (Human)).